Consider the following 303-residue polypeptide: Methionyl-tRNA formyltransferase (303 aa).

Position 106-109 (106-109 (SLLP)) interacts with (6S)-5,6,7,8-tetrahydrofolate.

The protein belongs to the Fmt family.

The enzyme catalyses L-methionyl-tRNA(fMet) + (6R)-10-formyltetrahydrofolate = N-formyl-L-methionyl-tRNA(fMet) + (6S)-5,6,7,8-tetrahydrofolate + H(+). In terms of biological role, attaches a formyl group to the free amino group of methionyl-tRNA(fMet). The formyl group appears to play a dual role in the initiator identity of N-formylmethionyl-tRNA by promoting its recognition by IF2 and preventing the misappropriation of this tRNA by the elongation apparatus. This is Methionyl-tRNA formyltransferase from Thermosipho melanesiensis (strain DSM 12029 / CIP 104789 / BI429).